A 327-amino-acid polypeptide reads, in one-letter code: Lipoyl synthase (327 aa).

Residues Cys-72, Cys-77, Cys-83, Cys-98, Cys-102, Cys-105, and Ser-313 each coordinate [4Fe-4S] cluster. In terms of domain architecture, Radical SAM core spans Cys-83–Leu-302.

It belongs to the radical SAM superfamily. Lipoyl synthase family. It depends on [4Fe-4S] cluster as a cofactor.

It is found in the cytoplasm. It catalyses the reaction [[Fe-S] cluster scaffold protein carrying a second [4Fe-4S](2+) cluster] + N(6)-octanoyl-L-lysyl-[protein] + 2 oxidized [2Fe-2S]-[ferredoxin] + 2 S-adenosyl-L-methionine + 4 H(+) = [[Fe-S] cluster scaffold protein] + N(6)-[(R)-dihydrolipoyl]-L-lysyl-[protein] + 4 Fe(3+) + 2 hydrogen sulfide + 2 5'-deoxyadenosine + 2 L-methionine + 2 reduced [2Fe-2S]-[ferredoxin]. The protein operates within protein modification; protein lipoylation via endogenous pathway; protein N(6)-(lipoyl)lysine from octanoyl-[acyl-carrier-protein]: step 2/2. Functionally, catalyzes the radical-mediated insertion of two sulfur atoms into the C-6 and C-8 positions of the octanoyl moiety bound to the lipoyl domains of lipoate-dependent enzymes, thereby converting the octanoylated domains into lipoylated derivatives. The protein is Lipoyl synthase of Francisella tularensis subsp. mediasiatica (strain FSC147).